A 320-amino-acid polypeptide reads, in one-letter code: MSLGKKIRIGFDGFGRINRFITRGAAQRNDSKLPSRNDALKHGLDGLGSAGSKSFRALAAIGAGVSGLLSFATIAYSDEAEHGLECPNYPWPHEGILSSYDHASIRRGHQVYQQVCASCHSMSLISYRDLVGVAYTEEETKAMAAEIEVVDGPNDEGEMFTRPGKLSDRFPQPYANEAAARFANGGAYPPDLSLITKARHNGQNYVFALLTAYRDPPAGVSIREGLHYNPYFPGGAIAMPKMLNDGAVEYEDGIPATEAQMGKDVVSFLSWAAEPEMEERKLMGFKWIFVLSLALLQAAYYRRLRWSVLKSRKLVLDVVN.

The N-terminal 77 residues, 1–77 (MSLGKKIRIG…LLSFATIAYS (77 aa)), are a transit peptide targeting the mitochondrion. Over 78–280 (DEAEHGLECP…WAAEPEMEER (203 aa)) the chain is Mitochondrial intermembrane. A Cytochrome c domain is found at 103-210 (ASIRRGHQVY…NGQNYVFALL (108 aa)). Residues Cys-116, Cys-119, His-120, and Met-239 each coordinate heme c. The chain crosses the membrane as a helical span at residues 281–301 (KLMGFKWIFVLSLALLQAAYY). Over 302-320 (RRLRWSVLKSRKLVLDVVN) the chain is Mitochondrial matrix.

The protein belongs to the cytochrome c family. As to quaternary structure, component of the ubiquinol-cytochrome c oxidoreductase (cytochrome b-c1 complex, complex III, CIII), a multisubunit enzyme composed of 3 respiratory subunits cytochrome b, cytochrome c1 and Rieske protein, 2 core protein subunits, and additional low-molecular weight protein subunits. The complex exists as an obligatory dimer and forms supercomplexes (SCs) in the inner mitochondrial membrane with cytochrome c oxidase (complex IV, CIV). Heme c serves as cofactor. As to expression, in all tissues analyzed.

Its subcellular location is the mitochondrion inner membrane. It catalyses the reaction a quinol + 2 Fe(III)-[cytochrome c](out) = a quinone + 2 Fe(II)-[cytochrome c](out) + 2 H(+)(out). Functionally, component of the ubiquinol-cytochrome c oxidoreductase, a multisubunit transmembrane complex that is part of the mitochondrial electron transport chain which drives oxidative phosphorylation. The respiratory chain contains 3 multisubunit complexes succinate dehydrogenase (complex II, CII), ubiquinol-cytochrome c oxidoreductase (cytochrome b-c1 complex, complex III, CIII) and cytochrome c oxidase (complex IV, CIV), that cooperate to transfer electrons derived from NADH and succinate to molecular oxygen, creating an electrochemical gradient over the inner membrane that drives transmembrane transport and the ATP synthase. The cytochrome b-c1 complex catalyzes electron transfer from ubiquinol to cytochrome c, linking this redox reaction to translocation of protons across the mitochondrial inner membrane, with protons being carried across the membrane as hydrogens on the quinol. In the process called Q cycle, 2 protons are consumed from the matrix, 4 protons are released into the intermembrane space and 2 electrons are passed to cytochrome c. Cytochrome c1 is a catalytic core subunit containing a c-type heme. It transfers electrons from the [2Fe-2S] iron-sulfur cluster of the Rieske protein to cytochrome c. The polypeptide is Cytochrome c1-1, heme protein, mitochondrial (CYCL) (Solanum tuberosum (Potato)).